The chain runs to 222 residues: Collectrin (222 aa).

Residues 1–14 form the signal peptide; it reads MLWALFFLVTTIHA. Over 15-141 the chain is Extracellular; that stretch reads ELCRPDAENA…LAPPMDPSVP (127 aa). Positions 21–222 constitute a Collectrin-like domain; it reads AENAFKVRLS…LTEDERLTPL (202 aa). N-linked (GlcNAc...) asparagine glycans are attached at residues Asn-76 and Asn-93. The helical transmembrane segment at 142–162 threads the bilayer; sequence VWIIVFGVIFCIVTVAIALLV. Topologically, residues 163–222 are cytoplasmic; it reads LSGIRQRRRNKKGPPGVEDAEDKCENIITIENGIPCDPLDMKGGHINDGFLTEDERLTPL. Phosphothreonine occurs at positions 214 and 220.

This sequence belongs to the CLTRN family. As to quaternary structure, monomer. Homodimer; dimerization prevents CLTRN cleavage by BACE2. Interacts with SLC6A18; this interaction regulates the trafficking of SLC6A18 to the cell membrane and its amino acid transporter activity. Interacts with SLC6A19; this interaction regulates the trafficking of SLC6A19 to the cell membrane and its amino acid transporter activity. Interacts with SNAPIN. Post-translationally, glycosylated. Glycosylation is required for plasma membrane localization and for its cleavage by BACE2. Proteolytically processed in pancreatic beta cells by BACE2 leading to the generation and extracellular release of soluble CLTRN, and a corresponding cell-associated C-terminal fragment which is later cleaved by gamma-secretase. This shedding process inactivates CLTRN. Three cleavage sites have been identified for BACE2, two clustered sites after Phe-116 and Leu-118 and a more membrane proximal site at Phe-125; the preferred BACE2 cleavage site seems to be between Phe-125 and Leu-126, Phe-116 and Leu-118 act as alternative sites. Kidney; collecting ducts. Pancreas; beta cells of islets.

It is found in the cell membrane. Plays an important role in amino acid transport by acting as binding partner of amino acid transporters SLC6A18 and SLC6A19, regulating their trafficking on the cell surface and their activity. May also play a role in trafficking of amino acid transporters SLC3A1 and SLC7A9 to the renal cortical cell membrane. Regulator of SNARE complex function. Stimulator of beta cell replication. This Rattus norvegicus (Rat) protein is Collectrin.